The chain runs to 60 residues: Arabinogalactan protein 12 (60 aa).

Residues 1 to 27 (MESMKMKLIVVLMVAIVAFSAVGNVAA) form the signal peptide. Gln28 carries the pyrrolidone carboxylic acid modification. 4-hydroxyproline occurs at positions 32, 34, and 36. Pro32, Pro34, and Pro36 each carry an O-linked (Ara...) hydroxyproline glycan. A lipid anchor (GPI-anchor amidated serine) is attached at Ser38. A propeptide spans 39–60 (DAAMFVPALFASVAALASGFLF) (removed in mature form).

It belongs to the AG-peptide AGP family. Post-translationally, contains 4-hydroxyproline; hydroxylated on Pro-32, Pro-34 and Pro-36. In terms of processing, O-glycosylated on hydroxyprolines; noncontiguous hydroxylproline residues are glycosylated with arabinogalactan. Expressed in reproductive tissues. Expressed in chalaza, funiculus, stigma, septum, style and transmitting tract.

It is found in the cell membrane. Functionally, proteoglycan that seems to be implicated in diverse developmental roles such as differentiation, cell-cell recognition, embryogenesis and programmed cell death. In Arabidopsis thaliana (Mouse-ear cress), this protein is Arabinogalactan protein 12.